The following is a 405-amino-acid chain: NADH-quinone oxidoreductase subunit D (405 aa).

This sequence belongs to the complex I 49 kDa subunit family. NDH-1 is composed of 14 different subunits. Subunits NuoB, C, D, E, F, and G constitute the peripheral sector of the complex.

The protein localises to the cell inner membrane. It catalyses the reaction a quinone + NADH + 5 H(+)(in) = a quinol + NAD(+) + 4 H(+)(out). In terms of biological role, NDH-1 shuttles electrons from NADH, via FMN and iron-sulfur (Fe-S) centers, to quinones in the respiratory chain. The immediate electron acceptor for the enzyme in this species is believed to be ubiquinone. Couples the redox reaction to proton translocation (for every two electrons transferred, four hydrogen ions are translocated across the cytoplasmic membrane), and thus conserves the redox energy in a proton gradient. This Afipia carboxidovorans (strain ATCC 49405 / DSM 1227 / KCTC 32145 / OM5) (Oligotropha carboxidovorans) protein is NADH-quinone oxidoreductase subunit D.